The sequence spans 460 residues: Phosphomethylpyrimidine synthase (460 aa).

Substrate is bound by residues Asn-80, Met-109, Tyr-139, His-175, 195-197, 236-239, and Glu-275; these read SRG and DSLR. His-279 is a Zn(2+) binding site. Tyr-302 lines the substrate pocket. His-343 contributes to the Zn(2+) binding site. 3 residues coordinate [4Fe-4S] cluster: Cys-423, Cys-426, and Cys-431.

It belongs to the ThiC family. Requires [4Fe-4S] cluster as cofactor.

The catalysed reaction is 5-amino-1-(5-phospho-beta-D-ribosyl)imidazole + S-adenosyl-L-methionine = 4-amino-2-methyl-5-(phosphooxymethyl)pyrimidine + CO + 5'-deoxyadenosine + formate + L-methionine + 3 H(+). Its pathway is cofactor biosynthesis; thiamine diphosphate biosynthesis. Its function is as follows. Catalyzes the synthesis of the hydroxymethylpyrimidine phosphate (HMP-P) moiety of thiamine from aminoimidazole ribotide (AIR) in a radical S-adenosyl-L-methionine (SAM)-dependent reaction. This is Phosphomethylpyrimidine synthase from Microcystis aeruginosa (strain NIES-843 / IAM M-2473).